Consider the following 405-residue polypeptide: Cysteine desulfurase IscS (405 aa).

Pyridoxal 5'-phosphate contacts are provided by residues 75-76 (AT), Asn-155, Gln-183, and 203-205 (SGH). Lys-206 carries the post-translational modification N6-(pyridoxal phosphate)lysine. Thr-243 provides a ligand contact to pyridoxal 5'-phosphate. Cys-329 functions as the Cysteine persulfide intermediate in the catalytic mechanism. Position 329 (Cys-329) interacts with [2Fe-2S] cluster.

This sequence belongs to the class-V pyridoxal-phosphate-dependent aminotransferase family. NifS/IscS subfamily. Homodimer. Forms a heterotetramer with IscU, interacts with other sulfur acceptors. The cofactor is pyridoxal 5'-phosphate.

It is found in the cytoplasm. It catalyses the reaction (sulfur carrier)-H + L-cysteine = (sulfur carrier)-SH + L-alanine. It functions in the pathway cofactor biosynthesis; iron-sulfur cluster biosynthesis. In terms of biological role, master enzyme that delivers sulfur to a number of partners involved in Fe-S cluster assembly, tRNA modification or cofactor biosynthesis. Catalyzes the removal of elemental sulfur atoms from cysteine to produce alanine. Functions as a sulfur delivery protein for Fe-S cluster synthesis onto IscU, an Fe-S scaffold assembly protein, as well as other S acceptor proteins. The protein is Cysteine desulfurase IscS of Pseudoalteromonas translucida (strain TAC 125).